The following is a 383-amino-acid chain: tRNA-specific 2-thiouridylase MnmA (383 aa).

ATP-binding positions include 9–16 (GMSGGVDS) and M35. The tract at residues 95–97 (NPD) is interaction with target base in tRNA. C100 serves as the catalytic Nucleophile. C100 and C196 are disulfide-bonded. G124 serves as a coordination point for ATP. Residues 146–148 (KDQ) form an interaction with tRNA region. Catalysis depends on C196, which acts as the Cysteine persulfide intermediate. Positions 308-309 (RY) are interaction with tRNA.

The protein belongs to the MnmA/TRMU family.

The protein localises to the cytoplasm. The enzyme catalyses S-sulfanyl-L-cysteinyl-[protein] + uridine(34) in tRNA + AH2 + ATP = 2-thiouridine(34) in tRNA + L-cysteinyl-[protein] + A + AMP + diphosphate + H(+). In terms of biological role, catalyzes the 2-thiolation of uridine at the wobble position (U34) of tRNA, leading to the formation of s(2)U34. This is tRNA-specific 2-thiouridylase MnmA from Burkholderia pseudomallei (strain 1106a).